Consider the following 125-residue polypeptide: Small ribosomal subunit protein eS8 (125 aa).

The protein belongs to the eukaryotic ribosomal protein eS8 family. As to quaternary structure, part of the 30S ribosomal subunit.

In Methanosarcina barkeri (strain Fusaro / DSM 804), this protein is Small ribosomal subunit protein eS8.